We begin with the raw amino-acid sequence, 280 residues long: Pantothenate synthetase (280 aa).

Residue 30 to 37 (MGALHRGH) coordinates ATP. His-37 serves as the catalytic Proton donor. Gln-61 is a binding site for (R)-pantoate. Position 61 (Gln-61) interacts with beta-alanine. 148 to 151 (GEKD) is a binding site for ATP. Position 154 (Gln-154) interacts with (R)-pantoate. Residues Val-177 and 185 to 188 (LSSR) each bind ATP.

Belongs to the pantothenate synthetase family. Homodimer.

The protein resides in the cytoplasm. The catalysed reaction is (R)-pantoate + beta-alanine + ATP = (R)-pantothenate + AMP + diphosphate + H(+). It participates in cofactor biosynthesis; (R)-pantothenate biosynthesis; (R)-pantothenate from (R)-pantoate and beta-alanine: step 1/1. In terms of biological role, catalyzes the condensation of pantoate with beta-alanine in an ATP-dependent reaction via a pantoyl-adenylate intermediate. This chain is Pantothenate synthetase, found in Azobacteroides pseudotrichonymphae genomovar. CFP2.